The sequence spans 1273 residues: Protein transport protein SEC31 (1273 aa).

7 WD repeats span residues 6 to 46 (EFSR…ELWS), 60 to 99 (QVDSKFNDLDWSHNNKIIAGALDNGSLELYSTNEANNAIN), 106 to 146 (NHSS…ESPS), 158 to 198 (SSVD…EVIH), 207 to 250 (GIKQ…TPLQ), 255 to 295 (GHQK…QLSQ), and 298 to 338 (ARGN…NTLD). Serine 349 is modified (phosphoserine). A WD 8; interaction with SEC13 repeat occupies 385–405 (HWAFGGKLVQITPDGKGVSIT). The interval 815–835 (TTSAPVHTEGKYAPPSQPSMA) is disordered. 7 positions are modified to phosphoserine: serine 836, serine 974, serine 977, serine 980, serine 988, serine 992, and serine 999. A disordered region spans residues 933 to 1162 (PSRAKAVSVA…SQVNTSAENV (230 aa)). Positions 994 to 1039 (VATSESPRASISNPYAPPQSSQQFPIGTISTANQTSNTAQVASSNP) are enriched in polar residues. Threonine 1050 is subject to Phosphothreonine. Serine 1053 is subject to Phosphoserine. Positions 1071-1094 (TATTQPNGSSYPPTGPYTNNHTMT) are enriched in polar residues. The segment covering 1095–1110 (SPPPVFNKPPTGPPPI) has biased composition (pro residues). Positions 1118-1129 (KLASIEQNPSQG) are enriched in polar residues. The segment covering 1130-1154 (ATYPPTLSSSASPLQPSQPPTLASQ) has biased composition (low complexity).

The protein belongs to the WD repeat SEC31 family. The COPII coat is composed of at least 5 proteins: the SEC23/24 complex, the SEC13/31 complex, and the protein SAR1. SEC13 and SEC31 make a 2:2 tetramer that forms the edge element of the COPII outer coat. The tetramer self-assembles in multiple copies to form the complete polyhedral cage. Interacts (via WD 8) with SEC13. Interacts with EMP24, ERV25, SEC16 and SHR3.

It is found in the cytoplasmic vesicle. It localises to the COPII-coated vesicle membrane. The protein localises to the endoplasmic reticulum membrane. Functionally, component of the coat protein complex II (COPII) which promotes the formation of transport vesicles from the endoplasmic reticulum (ER). The coat has two main functions, the physical deformation of the endoplasmic reticulum membrane into vesicles and the selection of cargo molecules. This Saccharomyces cerevisiae (strain ATCC 204508 / S288c) (Baker's yeast) protein is Protein transport protein SEC31 (SEC31).